Reading from the N-terminus, the 492-residue chain is Alpha-amylase-related protein (492 aa).

Residues 1–18 (MRLSLSVLLCLGLALTLA) form the signal peptide. At glutamine 19 the chain carries Pyrrolidone carboxylic acid. Residues cysteine 46 and cysteine 102 are joined by a disulfide bond. Asparagine 116, glutamine 167, and aspartate 176 together coordinate Ca(2+). A disulfide bond links cysteine 155 and cysteine 169. Arginine 204 is a binding site for chloride. Aspartate 206 acts as the Nucleophile in catalysis. Histidine 210 contributes to the Ca(2+) binding site. Residue glutamate 243 is the Proton donor of the active site. 2 residues coordinate chloride: asparagine 306 and arginine 341. Intrachain disulfides connect cysteine 374–cysteine 380, cysteine 416–cysteine 439, and cysteine 446–cysteine 458.

This sequence belongs to the glycosyl hydrolase 13 family. As to quaternary structure, monomer. It depends on Ca(2+) as a cofactor. The cofactor is chloride.

Its subcellular location is the secreted. The enzyme catalyses Endohydrolysis of (1-&gt;4)-alpha-D-glucosidic linkages in polysaccharides containing three or more (1-&gt;4)-alpha-linked D-glucose units.. This is Alpha-amylase-related protein (Amyrel) from Drosophila willistoni (Fruit fly).